A 204-amino-acid polypeptide reads, in one-letter code: CASP-like protein 3A1 (204 aa).

The Cytoplasmic portion of the chain corresponds to 1 to 39; that stretch reads MGSIGNGRNGSEVGIQIPAMGNKEVLERPAIPRWPRLGV. A helical transmembrane segment spans residues 40 to 60; sequence VMVATRAVALVMAVLSMALMI. Topologically, residues 61 to 88 are extracellular; the sequence is SAKQRGSLKIFGIEIPLYANWSFSDSLE. The N-linked (GlcNAc...) asparagine glycan is linked to N80. A helical transmembrane segment spans residues 89-109; it reads YLVGMSAVSAAYCLAQLLLTA. Residues 110 to 124 lie on the Cytoplasmic side of the membrane; it reads HKAVKNAPVVQSRNY. A helical membrane pass occupies residues 125 to 145; sequence AWLLFTGDQIFAYAMMSAGSA. Residues 146–179 lie on the Extracellular side of the membrane; sequence AAAVANLNRTGIRHTALPNFCKPLPRFCDLSAAS. A glycan (N-linked (GlcNAc...) asparagine) is linked at N153. Residues 180–200 traverse the membrane as a helical segment; sequence IACAFLSCIFLAASAVIDVIW. Topologically, residues 201–204 are cytoplasmic; it reads LSNM.

It belongs to the Casparian strip membrane proteins (CASP) family. As to quaternary structure, homodimer and heterodimers.

It localises to the cell membrane. The chain is CASP-like protein 3A1 from Oryza sativa subsp. indica (Rice).